We begin with the raw amino-acid sequence, 301 residues long: MKRKVLLMGRSESGKTSMRSIIFANYIARDTMRLGVTIDVEHSHVRFLGNLVLNLWDCGGQEGFLESYLTTQRDHIFRNVEVLIYVFDIESREHQKDIKNYKSCIEAISQNSKDAKIFCLIHKMDLVPEDQRDTLFKNKEQEIRQASLPLKPTCFRTSIWDETLYKAWSSIVYSLIPNVKVLEYNLDKFCKICEADEVVLFEKATFLVISHSARKVHKDVHRFEKISTIIKQFFLSCSKSQANFQAMEVRNSNFAAFIDAFTSNTYIMVIMSDPTIESSATLLNIQVAKSHFEKFINSTSN.

Residues 9–16 (GRSESGKT), 57–61 (DCGGQ), and 122–125 (HKMD) each bind GTP.

This sequence belongs to the GTR/RAG GTP-binding protein family.

The protein resides in the cytoplasm. The protein localises to the nucleus. It is found in the lysosome. Guanine nucleotide-binding protein that plays a crucial role in the cellular response to amino acid availability through regulation of the TOR signaling cascade. In Dictyostelium discoideum (Social amoeba), this protein is Ras-related GTP-binding protein A (ragA).